Here is a 249-residue protein sequence, read N- to C-terminus: tRNA (guanine-N(1)-)-methyltransferase (249 aa).

Residues Gly-118 and 138–143 (IGDYVL) each bind S-adenosyl-L-methionine.

The protein belongs to the RNA methyltransferase TrmD family. As to quaternary structure, homodimer.

The protein localises to the cytoplasm. The catalysed reaction is guanosine(37) in tRNA + S-adenosyl-L-methionine = N(1)-methylguanosine(37) in tRNA + S-adenosyl-L-homocysteine + H(+). Its function is as follows. Specifically methylates guanosine-37 in various tRNAs. The chain is tRNA (guanine-N(1)-)-methyltransferase from Alkaliphilus oremlandii (strain OhILAs) (Clostridium oremlandii (strain OhILAs)).